We begin with the raw amino-acid sequence, 192 residues long: UPF0462 protein C4orf33 homolog (192 aa).

This sequence belongs to the UPF0462 family.

This Mus musculus (Mouse) protein is UPF0462 protein C4orf33 homolog (D3Ertd751e).